The following is a 400-amino-acid chain: S-adenosylmethionine synthase (400 aa).

Position 136–141 (136–141) interacts with ATP; that stretch reads GTGSTD.

It belongs to the AdoMet synthase 2 family. Mg(2+) is required as a cofactor.

It carries out the reaction L-methionine + ATP + H2O = S-adenosyl-L-methionine + phosphate + diphosphate. It functions in the pathway amino-acid biosynthesis; S-adenosyl-L-methionine biosynthesis; S-adenosyl-L-methionine from L-methionine: step 1/1. Functionally, catalyzes the formation of S-adenosylmethionine from methionine and ATP. The chain is S-adenosylmethionine synthase from Methanoregula boonei (strain DSM 21154 / JCM 14090 / 6A8).